We begin with the raw amino-acid sequence, 283 residues long: Glutamate racemase (283 aa).

Substrate-binding positions include Asp28–Ser29 and Tyr60–Gly61. The active-site Proton donor/acceptor is Cys92. Residue Asn93–Thr94 participates in substrate binding. The active-site Proton donor/acceptor is the Cys204. Residue Thr205–His206 coordinates substrate.

Belongs to the aspartate/glutamate racemases family.

The catalysed reaction is L-glutamate = D-glutamate. It participates in cell wall biogenesis; peptidoglycan biosynthesis. Provides the (R)-glutamate required for cell wall biosynthesis. The protein is Glutamate racemase of Salmonella choleraesuis (strain SC-B67).